We begin with the raw amino-acid sequence, 432 residues long: 3-phosphoshikimate 1-carboxyvinyltransferase (432 aa).

The 3-phosphoshikimate site is built by K23, S24, and R28. K23 serves as a coordination point for phosphoenolpyruvate. Phosphoenolpyruvate is bound by residues G95 and R123. 3-phosphoshikimate contacts are provided by S167, Q169, D317, and K344. Residue Q169 participates in phosphoenolpyruvate binding. Catalysis depends on D317, which acts as the Proton acceptor. Phosphoenolpyruvate is bound by residues R348 and R390.

Belongs to the EPSP synthase family. Monomer.

Its subcellular location is the cytoplasm. It catalyses the reaction 3-phosphoshikimate + phosphoenolpyruvate = 5-O-(1-carboxyvinyl)-3-phosphoshikimate + phosphate. Its pathway is metabolic intermediate biosynthesis; chorismate biosynthesis; chorismate from D-erythrose 4-phosphate and phosphoenolpyruvate: step 6/7. In terms of biological role, catalyzes the transfer of the enolpyruvyl moiety of phosphoenolpyruvate (PEP) to the 5-hydroxyl of shikimate-3-phosphate (S3P) to produce enolpyruvyl shikimate-3-phosphate and inorganic phosphate. This chain is 3-phosphoshikimate 1-carboxyvinyltransferase, found in Staphylococcus aureus (strain N315).